The chain runs to 445 residues: Phosphoglucosamine mutase (445 aa).

The active-site Phosphoserine intermediate is Ser-105. 4 residues coordinate Mg(2+): Ser-105, Asp-244, Asp-246, and Asp-248. Residue Ser-105 is modified to Phosphoserine.

This sequence belongs to the phosphohexose mutase family. The cofactor is Mg(2+). Activated by phosphorylation.

The enzyme catalyses alpha-D-glucosamine 1-phosphate = D-glucosamine 6-phosphate. Functionally, catalyzes the conversion of glucosamine-6-phosphate to glucosamine-1-phosphate. The protein is Phosphoglucosamine mutase of Janthinobacterium sp. (strain Marseille) (Minibacterium massiliensis).